Here is a 393-residue protein sequence, read N- to C-terminus: STE20-related kinase adapter protein alpha (393 aa).

Phosphoserine is present on residues Ser2 and Ser9. One can recognise a Protein kinase domain in the interval 32–341 (YELLSVIGKG…ASTLLNHSFF (310 aa)). Phosphothreonine; by LKB1 is present on Thr381.

This sequence belongs to the protein kinase superfamily. STE Ser/Thr protein kinase family. STE20 subfamily. Component of a trimeric complex composed of STK11/LKB1, STRAD (STRADA or STRADB) and CAB39/MO25 (CAB39/MO25alpha or CAB39L/MO25beta): the complex tethers STK11/LKB1 in the cytoplasm and stimulates its catalytic activity. As to expression, expressed in liver.

It localises to the nucleus. Its subcellular location is the cytoplasm. Its function is as follows. Pseudokinase which, in complex with CAB39/MO25 (CAB39/MO25alpha or CAB39L/MO25beta), binds to and activates STK11/LKB1. Adopts a closed conformation typical of active protein kinases and binds STK11/LKB1 as a pseudosubstrate, promoting conformational change of STK11/LKB1 in an active conformation. The protein is STE20-related kinase adapter protein alpha (Strada) of Rattus norvegicus (Rat).